A 502-amino-acid chain; its full sequence is Mannitol 2-dehydrogenase (502 aa).

37 to 48 (IVHIGVGGFHRA) is a binding site for NAD(+).

Belongs to the mannitol dehydrogenase family. As to quaternary structure, monomer.

The enzyme catalyses D-mannitol + NAD(+) = D-fructose + NADH + H(+). Functionally, catalyzes the NAD(H)-dependent interconversion of D-fructose and D-mannitol in the mannitol metabolic pathway. In Aspergillus fumigatus (strain CBS 144.89 / FGSC A1163 / CEA10) (Neosartorya fumigata), this protein is Mannitol 2-dehydrogenase.